Consider the following 328-residue polypeptide: Eukaryotic translation initiation factor 3 subunit I (328 aa).

WD repeat units follow at residues 8 to 47 (GHERAITQIKYNREGDLIFSTAKDHKPSVWFSLNGERLGT), 50 to 91 (GHQG…GTIP), 148 to 187 (SIQTKITSMLWGALDETVITGHENGSIRIWDLRTAKELNS), 190 to 229 (DHTGVINDMQLSADGTMLVSASKDTTAKLFDSESLMCLKT), and 287 to 328 (GHFG…FVFE).

It belongs to the eIF-3 subunit I family. In terms of assembly, component of the eukaryotic translation initiation factor 3 (eIF-3) complex.

Its subcellular location is the cytoplasm. In terms of biological role, component of the eukaryotic translation initiation factor 3 (eIF-3) complex, which is involved in protein synthesis of a specialized repertoire of mRNAs and, together with other initiation factors, stimulates binding of mRNA and methionyl-tRNAi to the 40S ribosome. The eIF-3 complex specifically targets and initiates translation of a subset of mRNAs involved in cell proliferation. The sequence is that of Eukaryotic translation initiation factor 3 subunit I from Culex quinquefasciatus (Southern house mosquito).